Here is a 202-residue protein sequence, read N- to C-terminus: tRNA (pseudouridine(54)-N(1))-methyltransferase (202 aa).

The S-adenosyl-L-methionine site is built by Leu134 and Gly155.

The protein belongs to the methyltransferase superfamily. TrmY family. Homodimer.

It is found in the cytoplasm. It catalyses the reaction pseudouridine(54) in tRNA + S-adenosyl-L-methionine = N(1)-methylpseudouridine(54) in tRNA + S-adenosyl-L-homocysteine + H(+). Specifically catalyzes the N1-methylation of pseudouridine at position 54 (Psi54) in tRNAs. This is tRNA (pseudouridine(54)-N(1))-methyltransferase from Thermococcus gammatolerans (strain DSM 15229 / JCM 11827 / EJ3).